Consider the following 461-residue polypeptide: tRNA modification GTPase MnmE (461 aa).

Positions 27, 89, and 128 each coordinate (6S)-5-formyl-5,6,7,8-tetrahydrofolate. A TrmE-type G domain is found at 224–382 (GLATAIVGRP…LEELINKLFF (159 aa)). Residue Asn234 participates in K(+) binding. GTP is bound by residues 234–239 (NVGKSS), 253–259 (TDVAGTT), and 278–281 (DTAG). Ser238 is a Mg(2+) binding site. Residues Thr253, Val255, and Thr258 each contribute to the K(+) site. Thr259 contributes to the Mg(2+) binding site. Lys461 contacts (6S)-5-formyl-5,6,7,8-tetrahydrofolate.

Belongs to the TRAFAC class TrmE-Era-EngA-EngB-Septin-like GTPase superfamily. TrmE GTPase family. In terms of assembly, homodimer. Heterotetramer of two MnmE and two MnmG subunits. It depends on K(+) as a cofactor.

Its subcellular location is the cytoplasm. Functionally, exhibits a very high intrinsic GTPase hydrolysis rate. Involved in the addition of a carboxymethylaminomethyl (cmnm) group at the wobble position (U34) of certain tRNAs, forming tRNA-cmnm(5)s(2)U34. The chain is tRNA modification GTPase MnmE from Lactobacillus helveticus (strain DPC 4571).